A 164-amino-acid chain; its full sequence is Galectin-3 (164 aa).

The region spanning 9 to 154 (STVDLSEPLK…FSDVLGVTVL (146 aa)) is the Galectin domain. The a carbohydrate site is built by Asn45, Arg64, Asn73, Arg81, Glu84, and Asn138.

In terms of assembly, homotetramer. Oligomerization is required for carbohydrate binding.

The protein localises to the secreted. It localises to the extracellular space. The protein resides in the extracellular matrix. Its subcellular location is the cell wall. Its function is as follows. Binds complex carbohydrates, such as chitooligosaccharides. Does not bind lactose. May play a role in fruiting body formation. In Coprinopsis cinerea (Inky cap fungus), this protein is Galectin-3 (Cgl3).